A 616-amino-acid polypeptide reads, in one-letter code: MAU2 chromatid cohesion factor homolog (616 aa).

3 TPR repeats span residues 90 to 123, 445 to 478, and 485 to 518; these read FDTASLLAQLYQQQEQSSLAKPVLRKAIELSQHN, GSFYYVQGLNAFHKSSFHEAKRFLRETLKMANAE, and SCSLVLLSHVFLSIGNSKESMNMVTPAMQLASKI.

It belongs to the SCC4/mau-2 family. As to quaternary structure, component of the cohesin loading complex.

The protein resides in the nucleus. It localises to the nucleoplasm. Its function is as follows. Required for association of the cohesin complex with chromatin during interphase. Plays a role in sister chromatid cohesion and normal progression through prometaphase. This chain is MAU2 chromatid cohesion factor homolog, found in Culex quinquefasciatus (Southern house mosquito).